A 365-amino-acid chain; its full sequence is PHD finger protein 6 (365 aa).

At S2 the chain carries N-acetylserine. 2 short sequence motifs (nuclear localization signal) span residues R13–K16 and R129–K133. A C2HC pre-PHD-type 1 zinc finger spans residues Q14–L52. Residues Q14 to K132 form an extended PHD1 domain (ePHD1) region. Residues L80–K132 form a PHD-type 1 zinc finger. Residues S138, S145, and S155 each carry the phosphoserine modification. The segment at E139–K211 is disordered. A Nucleolar localization signal motif is present at residues K157 to K169. Basic residues predominate over residues K157–N171. K173 participates in a covalent cross-link: Glycyl lysine isopeptide (Lys-Gly) (interchain with G-Cter in SUMO2). Phosphoserine is present on residues S183 and S199. Residues R209–T249 form a C2HC pre-PHD-type 2 zinc finger. The tract at residues R209–S330 is extended PHD2 domain (ePHD2). Residue K227 forms a Glycyl lysine isopeptide (Lys-Gly) (interchain with G-Cter in SUMO2) linkage. The PHD-type 2 zinc finger occupies M278–S330. Residues S330 to N365 are disordered. Residues R342–I352 show a composition bias toward basic and acidic residues. Residues Q354 to N365 are compositionally biased toward low complexity. The residue at position 358 (T358) is a Phosphothreonine.

As to quaternary structure, interacts with UBTF. Interacts with the NuRD complex component RBBP4 (via the nucleolar localization motif), the interaction mediates transcriptional repression activity.

It localises to the nucleus. Its subcellular location is the nucleolus. The protein localises to the chromosome. It is found in the centromere. The protein resides in the kinetochore. Functionally, transcriptional regulator that associates with ribosomal RNA promoters and suppresses ribosomal RNA (rRNA) transcription. In Bos taurus (Bovine), this protein is PHD finger protein 6 (PHF6).